A 258-amino-acid polypeptide reads, in one-letter code: Acetylglutamate kinase (258 aa).

Residues 44–45, Arg66, and Asn158 each bind substrate; that span reads GG. Residues 181–186 and 209–211 each bind ATP; these read DVSGIL and IIT.

This sequence belongs to the acetylglutamate kinase family. ArgB subfamily. As to quaternary structure, homodimer.

The protein localises to the cytoplasm. It catalyses the reaction N-acetyl-L-glutamate + ATP = N-acetyl-L-glutamyl 5-phosphate + ADP. It functions in the pathway amino-acid biosynthesis; L-arginine biosynthesis; N(2)-acetyl-L-ornithine from L-glutamate: step 2/4. In terms of biological role, catalyzes the ATP-dependent phosphorylation of N-acetyl-L-glutamate. In Salmonella paratyphi A (strain ATCC 9150 / SARB42), this protein is Acetylglutamate kinase.